A 323-amino-acid polypeptide reads, in one-letter code: Apolipoprotein E (323 aa).

An N-terminal signal peptide occupies residues 1 to 18 (MKVLWAALVVTLLAGCWA). 8 consecutive repeat copies span residues 86 to 107 (ALMD…EQLG), 108 to 129 (PMTS…ARLR), 130 to 151 (SDME…AMLG), 152 to 173 (QSSE…KRVL), 174 to 195 (RDAE…EGAE), 196 to 217 (RSVS…ERNA), 218 to 239 (KVGA…QQLR), and 240 to 261 (GQLE…EQIQ). The tract at residues 86–261 (ALMDETMKEV…HLEEMREQIQ (176 aa)) is 8 X 22 AA approximate tandem repeats. Met149 carries the methionine sulfoxide modification. Position 153 is a phosphoserine (Ser153). Residues 164-174 (HMRKLRKRVLR) form an LDL and other lipoprotein receptors binding region. A heparin-binding site is contributed by 168 to 171 (LRKR). The tract at residues 216-296 (NAKVGALATQ…SWFEPLLEDM (81 aa)) is lipid-binding and lipoprotein association. Heparin is bound at residue 235–242 (GQQLRGQL). A homooligomerization region spans residues 272–323 (DQIRQKAEAFQARLKSWFEPLLEDMQRQWDGLVEKVQAAVATIPTSKPVEEP). The interval 284–296 (RLKSWFEPLLEDM) is specificity for association with VLDL.

Belongs to the apolipoprotein A1/A4/E family. As to quaternary structure, homotetramer. May interact with ABCA1; functionally associated with ABCA1 in the biogenesis of HDLs. May interact with APP/A4 amyloid-beta peptide; the interaction is extremely stable in vitro but its physiological significance is unclear. May interact with MAPT. May interact with MAP2. In the cerebrospinal fluid, interacts with secreted SORL1. Interacts with PMEL; this allows the loading of PMEL luminal fragment on ILVs to induce fibril nucleation. APOE exists as multiple glycosylated and sialylated glycoforms within cells and in plasma. The extent of glycosylation and sialylation are tissue and context specific. Post-translationally, glycated in plasma VLDL. In terms of processing, phosphorylated by FAM20C in the extracellular medium.

The protein localises to the secreted. It is found in the extracellular space. The protein resides in the extracellular matrix. It localises to the extracellular vesicle. Its subcellular location is the endosome. The protein localises to the multivesicular body. In terms of biological role, APOE is an apolipoprotein, a protein associating with lipid particles, that mainly functions in lipoprotein-mediated lipid transport between organs via the plasma and interstitial fluids. APOE is a core component of plasma lipoproteins and is involved in their production, conversion and clearance. Apolipoproteins are amphipathic molecules that interact both with lipids of the lipoprotein particle core and the aqueous environment of the plasma. As such, APOE associates with chylomicrons, chylomicron remnants, very low density lipoproteins (VLDL) and intermediate density lipoproteins (IDL) but shows a preferential binding to high-density lipoproteins (HDL). It also binds a wide range of cellular receptors including the LDL receptor/LDLR and the very low-density lipoprotein receptor/VLDLR that mediate the cellular uptake of the APOE-containing lipoprotein particles. Finally, APOE also has a heparin-binding activity and binds heparan-sulfate proteoglycans on the surface of cells, a property that supports the capture and the receptor-mediated uptake of APOE-containing lipoproteins by cells. The polypeptide is Apolipoprotein E (APOE) (Canis lupus familiaris (Dog)).